Here is a 146-residue protein sequence, read N- to C-terminus: Hemoglobin subunit beta-2 (146 aa).

The region spanning Lys-2–Cys-146 is the Globin domain. The heme b site is built by His-63 and His-92.

The protein belongs to the globin family. Heterotetramer of two alpha chains and two beta chains. As to expression, red blood cells.

In terms of biological role, involved in oxygen transport from gills to the various peripheral tissues. The protein is Hemoglobin subunit beta-2 (hbb2) of Lycodes reticulatus (Arctic eelpout).